We begin with the raw amino-acid sequence, 92 residues long: Small ribosomal subunit protein uS19 (92 aa).

This sequence belongs to the universal ribosomal protein uS19 family.

Its function is as follows. Protein S19 forms a complex with S13 that binds strongly to the 16S ribosomal RNA. This Methylorubrum extorquens (strain CM4 / NCIMB 13688) (Methylobacterium extorquens) protein is Small ribosomal subunit protein uS19.